A 104-amino-acid chain; its full sequence is GVVDSNDLPLNVSELVSNASDALDKLSSSPCVLVSGKFWDNFGKTZTVEVEDDSAEAKTLSKFLNAALTDKTEEVVRNWKLMNAAELLSEINRLSSSEWQAALR.

N-linked (GlcNAc...) asparagine glycans are attached at residues asparagine 11 and asparagine 18. ATP is bound at residue asparagine 18.

The protein belongs to the heat shock protein 90 family. In terms of assembly, homodimer.

The protein resides in the cytoplasm. In terms of biological role, putative molecular chaperone that may promote the maturation, structural maintenance and proper regulation of specific target proteins. This Pinus strobus (Eastern white pine) protein is Putative heat shock protein PS1.